The following is a 144-amino-acid chain: Large ribosomal subunit protein uL15 (144 aa).

A disordered region spans residues 1–50; the sequence is MRLNTLSPAAGAKSAKKRVGRGIGSGLGKTGGRGVKGAGSRSGGGVRAGF. The span at 21 to 50 shows a compositional bias: gly residues; the sequence is RGIGSGLGKTGGRGVKGAGSRSGGGVRAGF.

The protein belongs to the universal ribosomal protein uL15 family. Part of the 50S ribosomal subunit.

Its function is as follows. Binds to the 23S rRNA. The sequence is that of Large ribosomal subunit protein uL15 from Tolumonas auensis (strain DSM 9187 / NBRC 110442 / TA 4).